The primary structure comprises 65 residues: Sodium channel alpha-toxin Acra4 (65 aa).

The 62-residue stretch at arginine 2–histidine 63 folds into the LCN-type CS-alpha/beta domain. 4 disulfides stabilise this stretch: cysteine 12–cysteine 62, cysteine 16–cysteine 34, cysteine 20–cysteine 44, and cysteine 24–cysteine 46. Position 65 (arginine 65) is a propeptide, removed by a carboxypeptidase.

Belongs to the long (4 C-C) scorpion toxin superfamily. Sodium channel inhibitor family. Alpha subfamily. As to expression, expressed by the venom gland.

The protein localises to the secreted. Its function is as follows. Alpha toxins bind voltage-independently at site-3 of sodium channels (Nav) and inhibit the inactivation of the activated channels, thereby blocking neuronal transmission. Electrophysiological studies of this were performed using sodium-channels expressed in F11 cell culture, by patch-clamp recordings. Affinity of this toxin toward sodium channels in F11 cell line is in the order of 1 uM concentration. The polypeptide is Sodium channel alpha-toxin Acra4 (Androctonus crassicauda (Arabian fat-tailed scorpion)).